We begin with the raw amino-acid sequence, 383 residues long: MQTWQLPEHIADVLPTNARQLESAREQLLALFRVHGYELVQPPLMEYAHSLLTHIDAGLSLKTILVTDRLSGRQLGIRADITPQVARIDAHLLSANQGINRLCYAGPVLHAQPDGLLNMREPLQAGAEMYGFADIRGDIELIDLMLKSMKIADMGKVLLSLGHIGIFRALSDAAHLDAGQSATLLALMQDKDTGAVEAQVKAWKLDGMWAKAFSLLPRLYGGREVLSDARGRLPDLSAVGGALGELQAVCDAFPDCEIHIDLSELRVDNYHTGLLYAAYAADFHDAVARGGRYDGLGGYFGRARPATGFSFDLRSFIGRLPAIERQPAVLVDAEDAEAAREAVEALREQGQCVVIDYGIGHNVSEELAGRLKKTDGVWQVVKR.

This sequence belongs to the class-II aminoacyl-tRNA synthetase family. HisZ subfamily. In terms of assembly, heteromultimer composed of HisG and HisZ subunits.

Its subcellular location is the cytoplasm. It participates in amino-acid biosynthesis; L-histidine biosynthesis; L-histidine from 5-phospho-alpha-D-ribose 1-diphosphate: step 1/9. Required for the first step of histidine biosynthesis. May allow the feedback regulation of ATP phosphoribosyltransferase activity by histidine. The protein is ATP phosphoribosyltransferase regulatory subunit of Neisseria meningitidis serogroup C (strain 053442).